Consider the following 149-residue polypeptide: Large ribosomal subunit protein bL9 (149 aa).

It belongs to the bacterial ribosomal protein bL9 family.

In terms of biological role, binds to the 23S rRNA. The sequence is that of Large ribosomal subunit protein bL9 from Citrobacter koseri (strain ATCC BAA-895 / CDC 4225-83 / SGSC4696).